Consider the following 217-residue polypeptide: N-(5'-phosphoribosyl)anthranilate isomerase (217 aa).

The protein belongs to the TrpF family.

The enzyme catalyses N-(5-phospho-beta-D-ribosyl)anthranilate = 1-(2-carboxyphenylamino)-1-deoxy-D-ribulose 5-phosphate. It functions in the pathway amino-acid biosynthesis; L-tryptophan biosynthesis; L-tryptophan from chorismate: step 3/5. The protein is N-(5'-phosphoribosyl)anthranilate isomerase of Chlorobium phaeobacteroides (strain BS1).